A 165-amino-acid polypeptide reads, in one-letter code: ATP synthase subunit b (165 aa).

A helical membrane pass occupies residues 10-30 (LIFWMLLSFGIVFAVLAKYGF).

This sequence belongs to the ATPase B chain family. As to quaternary structure, F-type ATPases have 2 components, F(1) - the catalytic core - and F(0) - the membrane proton channel. F(1) has five subunits: alpha(3), beta(3), gamma(1), delta(1), epsilon(1). F(0) has three main subunits: a(1), b(2) and c(10-14). The alpha and beta chains form an alternating ring which encloses part of the gamma chain. F(1) is attached to F(0) by a central stalk formed by the gamma and epsilon chains, while a peripheral stalk is formed by the delta and b chains.

It is found in the cell inner membrane. Its function is as follows. F(1)F(0) ATP synthase produces ATP from ADP in the presence of a proton or sodium gradient. F-type ATPases consist of two structural domains, F(1) containing the extramembraneous catalytic core and F(0) containing the membrane proton channel, linked together by a central stalk and a peripheral stalk. During catalysis, ATP synthesis in the catalytic domain of F(1) is coupled via a rotary mechanism of the central stalk subunits to proton translocation. Functionally, component of the F(0) channel, it forms part of the peripheral stalk, linking F(1) to F(0). This Bacteroides fragilis (strain ATCC 25285 / DSM 2151 / CCUG 4856 / JCM 11019 / LMG 10263 / NCTC 9343 / Onslow / VPI 2553 / EN-2) protein is ATP synthase subunit b.